Reading from the N-terminus, the 227-residue chain is C4-dicarboxylate TRAP transporter small permease protein DctQ (227 aa).

Residues 1-7 (MLRILDR) are Cytoplasmic-facing. A helical membrane pass occupies residues 8 to 28 (AEEVLIAALIATATVLIFVSV). Topologically, residues 29–67 (THRFTLGFVADFVGFFRGHGMTGAAAAAKSLYTTLRGIN) are periplasmic. The chain crosses the membrane as a helical span at residues 68-88 (LVWAQELCIILFVWMAKFGAA). The Cytoplasmic segment spans residues 89–112 (YGVRTGIHVGIDVLINRLDAPKRR). Residues 113–133 (FFILLGLGAGALFTGIIATLG) form a helical membrane-spanning segment. Topologically, residues 134-149 (ANFVLHMYHASSTSPD) are periplasmic. The helical transmembrane segment at 150-170 (LELPMWLVYLAIPMGSSLMCF) threads the bilayer. At 171 to 227 (RFLQVAFGFARTGELPHHDHGHVDGVDTENEGIDAEGDVLLHSPLTPRDLVEKPKDN) the chain is on the cytoplasmic side.

The protein belongs to the TRAP transporter small permease family. In terms of assembly, the complex comprises the extracytoplasmic solute receptor protein DctP, and the two transmembrane proteins DctQ and DctM.

It is found in the cell inner membrane. Functionally, part of the tripartite ATP-independent periplasmic (TRAP) transport system DctPQM involved in C4-dicarboxylates uptake. In Rhodobacter capsulatus (Rhodopseudomonas capsulata), this protein is C4-dicarboxylate TRAP transporter small permease protein DctQ.